The following is an 890-amino-acid chain: Translation initiation factor IF-2 (890 aa).

The interval 50 to 304 (LRQGSPEQEE…LQQEFERPTA (255 aa)) is disordered. Composition is skewed to basic and acidic residues over residues 112–125 (KRSD…RKQE), 136–147 (RALEQEEAKREE), and 217–262 (ALKE…QEAK). Residues 390-559 (GRAPVVTVMG…VLQAELQELK (170 aa)) enclose the tr-type G domain. Positions 399-406 (GHVDHGKT) are G1. 399 to 406 (GHVDHGKT) contacts GTP. Positions 424 to 428 (GITQH) are G2. Positions 445-448 (DTPG) are G3. GTP is bound by residues 445–449 (DTPGH) and 499–502 (NKMD). Residues 499 to 502 (NKMD) form a G4 region. Residues 535-537 (SAM) are G5.

The protein belongs to the TRAFAC class translation factor GTPase superfamily. Classic translation factor GTPase family. IF-2 subfamily.

The protein resides in the cytoplasm. Functionally, one of the essential components for the initiation of protein synthesis. Protects formylmethionyl-tRNA from spontaneous hydrolysis and promotes its binding to the 30S ribosomal subunits. Also involved in the hydrolysis of GTP during the formation of the 70S ribosomal complex. The sequence is that of Translation initiation factor IF-2 from Halorhodospira halophila (strain DSM 244 / SL1) (Ectothiorhodospira halophila (strain DSM 244 / SL1)).